The sequence spans 598 residues: MAYRIITLILLLCSTSATAGLFDAPGRSNFVPADQAFAFDFQQQQHDVNLSWQIKDGYYLYRQQFTFSAAGATIDEPALPAGEWHEDEFYGKSEIFRQRLTVPVTVKEADKEATLTVTWQGCADAGFCYPPETKVIPLSAVRAASNDGQATAIEPMPSTSSRPAFNPPLPVEPRPAPELATSPAPAAVPPADTPARLPFTALWALLIGIGIAFTPCVLPMYPLISGIVLGGKQRLSTARALLLAFIYVQGMALTYTALGLVVAAAGLQFQAALQHPYVLVGLSAVFILLALSMFGLFTLQLPSSLQTRLTLLSNKRQGGSPGGVFAMGAIAGLICSPCTTAPLSAILLYIAQSGNLWLGGGTLYLYALGMGLPLILMTVFGNRLLPKSGPWMSHVKTAFGFVILALPVFLLERILGDQWGLRLWSMLGVAFFSWAFITSLGATRPWMRLVQIILLAAALVSARPLQDWAFGAPAVEQQAHLAFTRVSSVAELDQALAQAKGQPVMLDLYADWCVACKEFEKYTFSSPDVQQALKGTVLLQVDVTKNSPQDVALLKHLQVLGLPTILFFNAEGQEQSERRVTGFMDAAAFSAHLRDWQA.

An N-terminal signal peptide occupies residues M1 to A19. Cysteines 122 and 128 form a disulfide. A disordered region spans residues D147–A187. Over residues F165–A176 the composition is skewed to pro residues. 7 helical membrane passes run L197–V217, L242–V262, Y277–F297, I330–I350, L356–L376, W391–L411, and L423–T443. A disulfide bridge links C216 with C338. Residues L459–A598 form the Thioredoxin domain. C513 and C516 form a disulfide bridge.

Belongs to the thioredoxin family. DsbD subfamily.

The protein resides in the cell inner membrane. It catalyses the reaction [protein]-dithiol + NAD(+) = [protein]-disulfide + NADH + H(+). The catalysed reaction is [protein]-dithiol + NADP(+) = [protein]-disulfide + NADPH + H(+). Functionally, required to facilitate the formation of correct disulfide bonds in some periplasmic proteins and for the assembly of the periplasmic c-type cytochromes. Acts by transferring electrons from cytoplasmic thioredoxin to the periplasm. This transfer involves a cascade of disulfide bond formation and reduction steps. The protein is Thiol:disulfide interchange protein DsbD of Klebsiella pneumoniae subsp. pneumoniae (strain ATCC 700721 / MGH 78578).